A 650-amino-acid chain; its full sequence is DNA gyrase subunit B (650 aa).

A compositionally biased stretch (basic and acidic residues) spans 400–414 (RRSQEARELTRRKSP). The tract at residues 400-422 (RRSQEARELTRRKSPFDSGSLPG) is disordered. One can recognise a Toprim domain in the interval 435–549 (SELYIVEGDS…QGNIYIAQPP (115 aa)). Glutamate 441, aspartate 514, and aspartate 516 together coordinate Mg(2+).

The protein belongs to the type II topoisomerase GyrB family. As to quaternary structure, heterotetramer, composed of two GyrA and two GyrB chains. In the heterotetramer, GyrA contains the active site tyrosine that forms a transient covalent intermediate with DNA, while GyrB binds cofactors and catalyzes ATP hydrolysis. Mg(2+) is required as a cofactor. It depends on Mn(2+) as a cofactor. Requires Ca(2+) as cofactor.

The protein localises to the cytoplasm. It catalyses the reaction ATP-dependent breakage, passage and rejoining of double-stranded DNA.. Its function is as follows. A type II topoisomerase that negatively supercoils closed circular double-stranded (ds) DNA in an ATP-dependent manner to modulate DNA topology and maintain chromosomes in an underwound state. Negative supercoiling favors strand separation, and DNA replication, transcription, recombination and repair, all of which involve strand separation. Also able to catalyze the interconversion of other topological isomers of dsDNA rings, including catenanes and knotted rings. Type II topoisomerases break and join 2 DNA strands simultaneously in an ATP-dependent manner. In Mycoplasma pneumoniae (strain ATCC 29342 / M129 / Subtype 1) (Mycoplasmoides pneumoniae), this protein is DNA gyrase subunit B.